The primary structure comprises 314 residues: Homoserine O-acetyltransferase (314 aa).

The active-site Acyl-thioester intermediate is cysteine 142. Substrate is bound by residues lysine 163 and serine 192. Histidine 235 (proton acceptor) is an active-site residue. The active site involves glutamate 237. A substrate-binding site is contributed by arginine 249.

Belongs to the MetA family.

Its subcellular location is the cytoplasm. It carries out the reaction L-homoserine + acetyl-CoA = O-acetyl-L-homoserine + CoA. It functions in the pathway amino-acid biosynthesis; L-methionine biosynthesis via de novo pathway; O-acetyl-L-homoserine from L-homoserine: step 1/1. In terms of biological role, transfers an acetyl group from acetyl-CoA to L-homoserine, forming acetyl-L-homoserine. The sequence is that of Homoserine O-acetyltransferase from Streptococcus pneumoniae serotype 4 (strain ATCC BAA-334 / TIGR4).